The sequence spans 504 residues: Maturase K (504 aa).

Belongs to the intron maturase 2 family. MatK subfamily.

The protein localises to the plastid. Its subcellular location is the chloroplast. Usually encoded in the trnK tRNA gene intron. Probably assists in splicing its own and other chloroplast group II introns. This Arabidopsis thaliana (Mouse-ear cress) protein is Maturase K.